A 351-amino-acid polypeptide reads, in one-letter code: Phospho-N-acetylmuramoyl-pentapeptide-transferase (351 aa).

Transmembrane regions (helical) follow at residues 22–42 (ILAF…FISW), 65–85 (TPTM…LITT), 87–107 (FNKY…LGFI), 128–148 (FLLQ…VGFD), 158–178 (YPIF…IVAM), 190–210 (GLAT…LYIV), 225–245 (LGVG…LGFL), 254–274 (VFMG…LAIV), 279–299 (LLLI…ILQV), and 328–348 (KITI…ILSI).

Belongs to the glycosyltransferase 4 family. MraY subfamily. Mg(2+) is required as a cofactor.

Its subcellular location is the cell inner membrane. The enzyme catalyses UDP-N-acetyl-alpha-D-muramoyl-L-alanyl-gamma-D-glutamyl-meso-2,6-diaminopimeloyl-D-alanyl-D-alanine + di-trans,octa-cis-undecaprenyl phosphate = di-trans,octa-cis-undecaprenyl diphospho-N-acetyl-alpha-D-muramoyl-L-alanyl-D-glutamyl-meso-2,6-diaminopimeloyl-D-alanyl-D-alanine + UMP. It functions in the pathway cell wall biogenesis; peptidoglycan biosynthesis. In terms of biological role, catalyzes the initial step of the lipid cycle reactions in the biosynthesis of the cell wall peptidoglycan: transfers peptidoglycan precursor phospho-MurNAc-pentapeptide from UDP-MurNAc-pentapeptide onto the lipid carrier undecaprenyl phosphate, yielding undecaprenyl-pyrophosphoryl-MurNAc-pentapeptide, known as lipid I. The chain is Phospho-N-acetylmuramoyl-pentapeptide-transferase from Nautilia profundicola (strain ATCC BAA-1463 / DSM 18972 / AmH).